The sequence spans 403 residues: MSETECGRFSTISRETISNVERQLSQPPSVWLNLTGARIIENEGQFDKDIALPNNKSHVTHIAVDIGGSLAKVMYYVCESSSPSSSSSSISEAENYTGGRLSFMIFETAKIEDCIQFMANLIDNHVKNCNKKKITLIATGGGAYKFYDRMSKQLDIKVIREDEMECLIMGLNYFVSCIPREVFVLDLDTCELTFQNHLNCYHYPHMLVNIGSGVSILKVTGPSQFERIGGSSLGGGTLWGLLSLLTPANSFDEMLELSKGGDNTSVDMLVGDIYGKDIGYERFGLKSTTIASSFGKVFRERKPLEEFAPQDISRSLLLAISNNIGQIAYLHAQKHNVQNIYFGGSFIRNHVQTMHTLTYAIQYWSNHTMNAYFLRHEGYLGVFGAFMKYATSQPSNVPVPSIS.

Ser-80, Ser-82, and Ser-84 each carry phosphoserine.

This sequence belongs to the type II pantothenate kinase family.

It localises to the cytoplasm. It is found in the nucleus. The catalysed reaction is (R)-pantothenate + ATP = (R)-4'-phosphopantothenate + ADP + H(+). It participates in cofactor biosynthesis; coenzyme A biosynthesis; CoA from (R)-pantothenate: step 1/5. Regulated by feedback inhibition by malonyl-CoA. Functionally, plays a role in the physiological regulation of the intracellular CoA concentration. This is Pantothenate kinase from Schizosaccharomyces pombe (strain 972 / ATCC 24843) (Fission yeast).